The chain runs to 288 residues: 11-beta-hydroxysteroid dehydrogenase 1 (288 aa).

The Cytoplasmic segment spans residues 1–4; it reads MKKY. The chain crosses the membrane as a helical; Signal-anchor for type II membrane protein span at residues 5-20; it reads LLPVLVLCLGYYYSTN. Residues 21–288 are Lumenal-facing; it reads EEFRPEMLQG…SYNRDLFVSN (268 aa). NADP(+) contacts are provided by residues 37–63, 88–89, and 115–117; these read GASK…TARS, TM, and NHI. An N-linked (GlcNAc...) asparagine glycan is attached at N158. A substrate-binding site is contributed by S166. Y179 acts as the Proton acceptor in catalysis. 179–183 contributes to the NADP(+) binding site; the sequence is YSASK. N-linked (GlcNAc...) asparagine glycosylation is present at N203. Residues 212-218 and 214-218 contribute to the NADP(+) site; these read GFIDTET and IDTET.

The protein belongs to the short-chain dehydrogenases/reductases (SDR) family. Homodimer. Post-translationally, glycosylated. As to expression, liver, kidney, lung and testis. Brain. Expressed in liver (at protein level).

It localises to the endoplasmic reticulum membrane. The enzyme catalyses an 11beta-hydroxysteroid + NADP(+) = an 11-oxosteroid + NADPH + H(+). It carries out the reaction corticosterone + NADP(+) = 11-dehydrocorticosterone + NADPH + H(+). It catalyses the reaction a 7beta-hydroxysteroid + NADP(+) = a 7-oxosteroid + NADPH + H(+). The catalysed reaction is 7-oxocholesterol + NADPH + H(+) = 7beta-hydroxycholesterol + NADP(+). The enzyme catalyses chenodeoxycholate + NADP(+) = 7-oxolithocholate + NADPH + H(+). It carries out the reaction 7-oxolithocholate + NADPH + H(+) = ursodeoxycholate + NADP(+). It catalyses the reaction glycochenodeoxycholate + NADP(+) = 7-oxoglycolithocholate + NADPH + H(+). The catalysed reaction is taurochenodeoxycholate + NADP(+) = 7-oxotaurolithocholate + NADPH + H(+). The enzyme catalyses tauroursodeoxycholate + NADP(+) = 7-oxotaurolithocholate + NADPH + H(+). It carries out the reaction glycoursodeoxycholate + NADP(+) = 7-oxoglycolithocholate + NADPH + H(+). It catalyses the reaction 7-oxopregnenolone + NADPH + H(+) = 7beta-hydroxypregnenolone + NADP(+). The catalysed reaction is 3beta,7alpha-dihydroxyandrost-5-en-17-one + NADP(+) = 3beta-hydroxy-5-androstene-7,17-dione + NADPH + H(+). The enzyme catalyses 3beta-hydroxy-5-androstene-7,17-dione + NADPH + H(+) = 3beta,7beta-dihydroxyandrost-5-en-17-one + NADP(+). It carries out the reaction 3beta-hydroxy-5alpha-androstane-7,17-dione + NADPH + H(+) = 3beta,7beta-dihydroxy-5alpha-androstan-17-one + NADP(+). Its function is as follows. Controls the reversible conversion of biologically active glucocorticoids such as 11-dehydrocorticosterone to corticosterone using NADP(H). Participates in the corticosteroid receptor-mediated anti-inflammatory response, as well as metabolic and homeostatic processes. Bidirectional in vitro, predominantly functions as a reductase in vivo, thereby increasing the concentration of active glucocorticoids. It has broad substrate specificity, besides glucocorticoids, it accepts other steroid and sterol substrates. Interconverts 7-oxo- and 7-hydroxy-neurosteroids such as 7-oxopregnenolone and 7beta-hydroxypregnenolone, 7-oxodehydroepiandrosterone (3beta-hydroxy-5-androstene-7,17-dione) and 7beta-hydroxydehydroepiandrosterone (3beta,7beta-dihydroxyandrost-5-en-17-one), among others. Catalyzes the stereo-specific conversion of the major dietary oxysterol, 7-ketocholesterol (7-oxocholesterol), into the more polar 7-beta-hydroxycholesterol metabolite. 7-oxocholesterol is one of the most important oxysterols, it participates in several events such as induction of apoptosis, accumulation in atherosclerotic lesions, lipid peroxidation, and induction of foam cell formation. Mediates the 7-oxo reduction of 7-oxolithocholate mainly to chenodeoxycholate, and to a lesser extent to ursodeoxycholate, both in its free form and when conjugated to glycine or taurine, providing a link between glucocorticoid activation and bile acid metabolism. Catalyzes the synthesis of 7-beta-25-dihydroxycholesterol from 7-oxo-25-hydroxycholesterol in vitro, which acts as a ligand for the G-protein-coupled receptor (GPCR) Epstein-Barr virus-induced gene 2 (EBI2) and may thereby regulate immune cell migration. This is 11-beta-hydroxysteroid dehydrogenase 1 from Rattus norvegicus (Rat).